Reading from the N-terminus, the 1850-residue chain is MEPSSPQDEGLRKKQPKKPVPEILPRPPRALFCLTLQNPLRKACISVVEWKPFETIILLTIFANCVALAVYLPMPEDDNNTLNLGLEKLEYFFLIVFSIEAAMKIIAYGFLFHQDAYLRSGWNVLDFIIVFLGVFTAILEQVNIIQTNTAPMSSKGAGLDVKALRAFRVLRPLRLVSGVPSLQVVLNSIFKAMLPLFHIALLVLFMVIIYAIIGLELFKGKMHKTCYFIGTDIVATVENEKPSPCARTGSGRPCTINGSECRGGWPGPNHGITHFDNFGFSMLTVYQCISMEGWTDVLYWVNDAIGNEWPWIYFVTLILLGSFFILNLVLGVLSGEFTKEREKAKSRGTFQKLREKQQLEEDLRGYMSWITQGEVMDVDDLREGKLSLDEGGSDTESLYEIEGLNKIIQFIRHWRQWNRVFRWKCHDLVKSKVFYWLVILIVALNTLSIASEHHNQPLWLTHLQDVANRVLLALFTIEMLMKMYGLGLRQYFMSIFNRFDCFVVCSGILEILLVESGAMTPLGISVLRCIRLLRLFKITKYWTSLSNLVASLLNSIRSIASLLLLLFLFMIIFALLGMQLFGGRYDFEDTEVRRSNFDNFPQALISVFQVLTGEDWNSVMYNGIMAYGGPSYPGVLVCIYFIILFVCGNYILLNVFLAIAVDNLAEAESLTSAQKAKAEERKRRKMSRGLPDKSEEERSTMTKKLEQKPKGEGIPTTAKLKIDEFESNVNEVKDPYPSADFPGDDEEDEPEIPASPRPRPLAELQLKEKAVPIPEASSFFIFSPTNKIRVLCHRIVNATWFTNFILLFILLSSAALAAEDPIRADSMRNQILEYFDYVFTAVFTVEIVLKMTTYGAFLHKGSFCRNYFNILDLLVVAVSLISMGLESSAISVVKILRVLRVLRPLRAINRAKGLKHVVQCVFVAIRTIGNIVLVTTLLQFMFACIGVQLFKGKFYSCNDLSKMTEEECRGYYYIYKDGDPTQIELRPRQWIHNDFHFDNVLSAMMSLFTVSTFEGWPQLLYKAIDSNEEDTGPVYNNRVEMAIFFIIYIILIAFFMMNIFVGFVIVTFQEQGETEYKNCELDKNQRQCVQYALKARPLRCYIPKNPYQYQVWYVVTSSYFEYLMFALIMLNTICLGMQHYNQSEQMNHISDILNVAFTIIFTLEMILKLIAFKPRGYFGDPWNVFDFLIVIGSIIDVILSEIDTLLASSGGLYCLGGGCGNVDPDESARISSAFFRLFRVMRLIKLLSRAEGVRTLLWTFIKSFQALPYVALLIVMLFFIYAVIGMQMFGKIAMVDGTQINRNNNFQTFPQAVLLLFRCATGEAWQEILLACSYGKRCDPESDYAPGEEYACGTNFAYYYFISFYMLCAFLIINLFVAVIMDNFDYLTRDWSILGPHHLDEFKAIWAEYDPEAKGRIKHLDVVTLLRRIQPPLGFGKFCPHRVACKRLVGMNMPLNSDGTVTFNATLFALVRTALKIKTEGNFEQANEELRAIIKKIWKRTSMKLLDQVIPPIGDDEVTVGKFYATFLIQEHFRKFMKRQEEYYGYRPKKDTVQIQAGLRTIEEEAAPEIHRAISGDLTAEEELERAMVEAAMEEGIFRRTGGLFGQVDNFLERTNSLPPVMANQRPLQFAEMEMEELESPVFLEDFPQNPGTHPLARANTNNANANVAYGNSSHRNSPVFSSIRYERELLEEAGRPVTREGPFSQPCSVSGVNSRSHVDKLERQMSQRRMPKGQVPPSPCQLSQEKHPVHEEGKGPRSWSTETSDSESFEERVPRNSAHKCTAPATTMLIQEALVRGGLDSLAADANFVMATGQALADACQMEPEEVEVAATELLKRESPKGGAMPREP.

Positions 1-23 (MEPSSPQDEGLRKKQPKKPVPEI) are disordered. The Cytoplasmic segment spans residues 1–51 (MEPSSPQDEGLRKKQPKKPVPEILPRPPRALFCLTLQNPLRKACISVVEWK). An I repeat occupies 38 to 337 (NPLRKACISV…LVLGVLSGEF (300 aa)). A helical transmembrane segment spans residues 52 to 70 (PFETIILLTIFANCVALAV). The Extracellular portion of the chain corresponds to 71-85 (YLPMPEDDNNTLNLG). A helical membrane pass occupies residues 86–106 (LEKLEYFFLIVFSIEAAMKII). The Cytoplasmic portion of the chain corresponds to 107-115 (AYGFLFHQD). The helical transmembrane segment at 116–136 (AYLRSGWNVLDFIIVFLGVFT) threads the bilayer. Topologically, residues 137 to 160 (AILEQVNIIQTNTAPMSSKGAGLD) are extracellular. A helical transmembrane segment spans residues 161 to 179 (VKALRAFRVLRPLRLVSGV). At 180-196 (PSLQVVLNSIFKAMLPL) the chain is on the cytoplasmic side. Residues 197 to 218 (FHIALLVLFMVIIYAIIGLELF) traverse the membrane as a helical segment. The Extracellular portion of the chain corresponds to 219 to 279 (KGKMHKTCYF…HGITHFDNFG (61 aa)). 2 disulfide bridges follow: Cys-226-Cys-254 and Cys-245-Cys-261. The pore-forming intramembrane region spans 280-301 (FSMLTVYQCISMEGWTDVLYWV). The Selectivity filter of repeat I signature appears at 290-293 (SMEG). Residue Glu-292 coordinates Ca(2+). Residues 302 to 309 (NDAIGNEW) lie on the Extracellular side of the membrane. The helical transmembrane segment at 310-330 (PWIYFVTLILLGSFFILNLVL) threads the bilayer. Topologically, residues 331-432 (GVLSGEFTKE…WKCHDLVKSK (102 aa)) are cytoplasmic. The binding to the beta subunit stretch occupies residues 357–374 (QQLEEDLRGYMSWITQGE). Phosphoserine is present on residues Ser-393 and Ser-397. An II repeat occupies 418–664 (NRVFRWKCHD…VFLAIAVDNL (247 aa)). The helical transmembrane segment at 433 to 451 (VFYWLVILIVALNTLSIAS) threads the bilayer. The Extracellular segment spans residues 452-462 (EHHNQPLWLTH). A helical transmembrane segment spans residues 463 to 483 (LQDVANRVLLALFTIEMLMKM). The Cytoplasmic portion of the chain corresponds to 484–494 (YGLGLRQYFMS). A helical transmembrane segment spans residues 495–514 (IFNRFDCFVVCSGILEILLV). The Extracellular segment spans residues 515-523 (ESGAMTPLG). A helical transmembrane segment spans residues 524–542 (ISVLRCIRLLRLFKITKYW). The Cytoplasmic segment spans residues 543 to 561 (TSLSNLVASLLNSIRSIAS). A helical transmembrane segment spans residues 562–581 (LLLLLFLFMIIFALLGMQLF). At 582-601 (GGRYDFEDTEVRRSNFDNFP) the chain is on the extracellular side. The pore-forming intramembrane region spans 602 to 623 (QALISVFQVLTGEDWNSVMYNG). The Selectivity filter of repeat II signature appears at 612 to 615 (TGED). Glu-614 provides a ligand contact to Ca(2+). Residues 624–633 (IMAYGGPSYP) are Extracellular-facing. A helical transmembrane segment spans residues 634–653 (GVLVCIYFIILFVCGNYILL). Over 654-799 (NVFLAIAVDN…VLCHRIVNAT (146 aa)) the chain is Cytoplasmic. 2 disordered regions span residues 673-717 (AQKA…IPTT) and 731-758 (EVKDPYPSADFPGDDEEDEPEIPASPRP). A Phosphoserine; by PKA modification is found at Ser-687. A compositionally biased stretch (basic and acidic residues) spans 690–711 (LPDKSEEERSTMTKKLEQKPKG). Residues 742-751 (PGDDEEDEPE) show a composition bias toward acidic residues. Residues 786–1068 (NKIRVLCHRI…IFVGFVIVTF (283 aa)) form an III repeat. Residues 800–818 (WFTNFILLFILLSSAALAA) traverse the membrane as a helical segment. Residues 819 to 830 (EDPIRADSMRNQ) lie on the Extracellular side of the membrane. Residues 831-850 (ILEYFDYVFTAVFTVEIVLK) form a helical membrane-spanning segment. Residues 851–866 (MTTYGAFLHKGSFCRN) are Cytoplasmic-facing. A helical membrane pass occupies residues 867–885 (YFNILDLLVVAVSLISMGL). The Extracellular segment spans residues 886-892 (ESSAISV). Residues 893 to 911 (VKILRVLRVLRPLRAINRA) form a helical membrane-spanning segment. Residues 912-930 (KGLKHVVQCVFVAIRTIGN) are Cytoplasmic-facing. The helical transmembrane segment at 931–950 (IVLVTTLLQFMFACIGVQLF) threads the bilayer. Topologically, residues 951-1000 (KGKFYSCNDLSKMTEEECRGYYYIYKDGDPTQIELRPRQWIHNDFHFDNV) are extracellular. The cysteines at positions 957 and 968 are disulfide-linked. Residues 988-1077 (RQWIHNDFHF…FQEQGETEYK (90 aa)) are dihydropyridine binding. An intramembrane region (pore-forming) is located at residues 1001–1021 (LSAMMSLFTVSTFEGWPQLLY). Residues 1012-1015 (TFEG) carry the Selectivity filter of repeat III motif. Glu-1014 lines the Ca(2+) pocket. The Extracellular segment spans residues 1022–1038 (KAIDSNEEDTGPVYNNR). Residues 1039-1060 (VEMAIFFIIYIILIAFFMMNIF) traverse the membrane as a helical segment. Over 1061–1118 (VGFVIVTFQEQGETEYKNCELDKNQRQCVQYALKARPLRCYIPKNPYQYQVWYVVTSS) the chain is Cytoplasmic. Residues 1105-1384 (NPYQYQVWYV…LFVAVIMDNF (280 aa)) form an IV repeat. Residues 1119–1140 (YFEYLMFALIMLNTICLGMQHY) form a helical membrane-spanning segment. Asn-1141 carries an N-linked (GlcNAc...) asparagine glycan. Residues 1141–1148 (NQSEQMNH) are Extracellular-facing. Residues 1149 to 1170 (ISDILNVAFTIIFTLEMILKLI) form a helical membrane-spanning segment. Over 1171-1180 (AFKPRGYFGD) the chain is Cytoplasmic. Residues 1181–1200 (PWNVFDFLIVIGSIIDVILS) form a helical membrane-spanning segment. Residues 1201–1231 (EIDTLLASSGGLYCLGGGCGNVDPDESARIS) lie on the Extracellular side of the membrane. The chain crosses the membrane as a helical span at residues 1232 to 1250 (SAFFRLFRVMRLIKLLSRA). The Cytoplasmic portion of the chain corresponds to 1251 to 1268 (EGVRTLLWTFIKSFQALP). The helical transmembrane segment at 1269–1289 (YVALLIVMLFFIYAVIGMQMF) threads the bilayer. Over 1290-1311 (GKIAMVDGTQINRNNNFQTFPQ) the chain is Extracellular. Positions 1312-1330 (AVLLLFRCATGEAWQEILL) form an intramembrane region, pore-forming. Positions 1321 to 1324 (TGEA) match the Selectivity filter of repeat IV motif. Over 1331-1356 (ACSYGKRCDPESDYAPGEEYACGTNF) the chain is Extracellular. Residues 1337–1403 (RCDPESDYAP…LGPHHLDEFK (67 aa)) form a dihydropyridine binding region. Cys-1338 and Cys-1352 form a disulfide bridge. The phenylalkylamine binding stretch occupies residues 1349–1391 (EYACGTNFAYYYFISFYMLCAFLIINLFVAVIMDNFDYLTRDW). Residues 1357–1381 (AYYYFISFYMLCAFLIINLFVAVIM) traverse the membrane as a helical segment. Residues 1382 to 1850 (DNFDYLTRDW…PKGGAMPREP (469 aa)) lie on the Cytoplasmic side of the membrane. Positions 1522 to 1542 (KFYATFLIQEHFRKFMKRQEE) are interaction with calmodulin. The residue at position 1575 (Ser-1575) is a Phosphoserine; by PKA and CAMK2. Phosphothreonine is present on Thr-1579. Ser-1617 bears the Phosphoserine; by PKA mark. A disordered region spans residues 1697–1779 (PVTREGPFSQ…FEERVPRNSA (83 aa)). The span at 1706–1716 (QPCSVSGVNSR) shows a compositional bias: polar residues. 2 stretches are compositionally biased toward basic and acidic residues: residues 1717–1726 (SHVDKLERQM) and 1745–1756 (QEKHPVHEEGKG).

This sequence belongs to the calcium channel alpha-1 subunit (TC 1.A.1.11) family. CACNA1S subfamily. As to quaternary structure, component of a calcium channel complex consisting of a pore-forming alpha subunit (CACNA1S) and the ancillary subunits CACNB1 or CACNB2, CACNG1 and CACNA2D1. The channel complex contains alpha, beta, gamma and delta subunits in a 1:1:1:1 ratio, i.e. it contains either CACNB1 or CACNB2. CACNA1S channel activity is modulated by the auxiliary subunits (CACNB1 or CACNB2, CACNG1 and CACNA2D1). Interacts with DYSF and JSRP1. Interacts with RYR1. Interacts with STAC, STAC2 and STAC3 (via their SH3 domains). Interacts with CALM. Post-translationally, the alpha-1S subunit is found in two isoforms in the skeletal muscle: a minor form of 212 kDa containing the complete amino acid sequence, and a major form of 190 kDa derived from the full-length form by post-translational proteolysis close to Phe-1690. Phosphorylated. Phosphorylation by PKA activates the calcium channel. Both the minor and major forms are phosphorylated in vitro by PKA. Phosphorylation at Ser-1575 is involved in beta-adrenergic-mediated regulation of the channel. Skeletal muscle specific.

The protein localises to the cell membrane. It is found in the sarcolemma. It localises to the T-tubule. The catalysed reaction is Ca(2+)(in) = Ca(2+)(out). Channel activity is blocked by dihydropyridines (DHP), phenylalkylamines, and by benzothiazepines. In terms of biological role, pore-forming, alpha-1S subunit of the voltage-gated calcium channel that gives rise to L-type calcium currents in skeletal muscle. Calcium channels containing the alpha-1S subunit play an important role in excitation-contraction coupling in skeletal muscle via their interaction with RYR1, which triggers Ca(2+) release from the sarcplasmic reticulum and ultimately results in muscle contraction. Long-lasting (L-type) calcium channels belong to the 'high-voltage activated' (HVA) group. In Rattus norvegicus (Rat), this protein is Voltage-dependent L-type calcium channel subunit alpha-1S (Cacna1s).